Here is a 418-residue protein sequence, read N- to C-terminus: Glutamyl-tRNA reductase (418 aa).

Residues 49–52, Ser-109, 114–116, and Gln-120 contribute to the substrate site; these read TCNR and EPQ. Cys-50 (nucleophile) is an active-site residue. NADP(+) is bound at residue 189 to 194; it reads GAGETI.

It belongs to the glutamyl-tRNA reductase family. As to quaternary structure, homodimer.

It catalyses the reaction (S)-4-amino-5-oxopentanoate + tRNA(Glu) + NADP(+) = L-glutamyl-tRNA(Glu) + NADPH + H(+). It functions in the pathway porphyrin-containing compound metabolism; protoporphyrin-IX biosynthesis; 5-aminolevulinate from L-glutamyl-tRNA(Glu): step 1/2. Catalyzes the NADPH-dependent reduction of glutamyl-tRNA(Glu) to glutamate 1-semialdehyde (GSA). The chain is Glutamyl-tRNA reductase from Cronobacter sakazakii (strain ATCC BAA-894) (Enterobacter sakazakii).